Consider the following 432-residue polypeptide: Interleukin-11 receptor subunit alpha-1 (432 aa).

An N-terminal signal peptide occupies residues 1 to 23 (MSSSCSGLTRVLVAVATALVSSS). The Extracellular segment spans residues 24–372 (SPCPQAWGPP…DPLEQVAVLA (349 aa)). Residues 27–110 (PQAWGPPGVQ…SGGMVTLKLG (84 aa)) form the Ig-like C2-type domain. Disulfide bonds link Cys48–Cys94, Cys120–Cys130, and Cys170–Cys180. Fibronectin type-III domains lie at 112–219 (PPAR…LRPD) and 220–317 (PPQG…TPST). A glycan (N-linked (GlcNAc...) asparagine) is linked at Asn127. The disordered stretch occupies residues 151–170 (KTLPGAESQRESPSTGPWPC). The N-linked (GlcNAc...) asparagine glycan is linked to Asn194. The WSXWS motif motif lies at 304–308 (WSAWS). Disordered regions lie at residues 309–332 (PEAWGTPSTGPLQDEIPDWSQGHG) and 342–361 (EDSPAPARPSLQPDPRPLDH). The chain crosses the membrane as a helical span at residues 373–393 (SLGIFSCLGLAVGALALGLWL). Residues 394–432 (RLRRSGKDGPQKPGLLAPMIPVEKLPGIPNLQRTPENFS) are Cytoplasmic-facing.

This sequence belongs to the type I cytokine receptor family. Type 3 subfamily. As to quaternary structure, on IL11 binding, forms a multimer complex with IL6ST/gp130. A short soluble form is also released from the membrane by proteolysis. The sIL11RA is formed either by limited proteolysis of membrane-bound receptors, a process referred to as ectodomain shedding, or directly secreted from the cells after alternative mRNA splicing. mIL11RA is cleaved by the proteases ADAM10, ELANE and PRTN3. Widely expressed in all adult tissues and in embryos. Highest levels in kidney, skeletal muscle and embryo.

It is found in the membrane. The protein localises to the secreted. Its function is as follows. Receptor for interleukin-11. The receptor systems for IL6, LIF, OSM, CNTF, IL11 and CT1 can utilize IL6ST for initiating signal transmission. The IL11/IL11RA/IL6ST complex may be involved in the control of proliferation and/or differentiation of skeletogenic progenitor or other mesenchymal cells. Essential for the normal development of craniofacial bones and teeth. In terms of biological role, soluble form of IL11 receptor (sIL11RA) that acts as an agonist of IL11 activity. The IL11:sIL11RA complex binds to IL6ST/gp130 on cell surfaces and induces signaling also on cells that do not express membrane-bound IL11RA in a process called IL11 trans-signaling. This is Interleukin-11 receptor subunit alpha-1 from Mus musculus (Mouse).